The chain runs to 91 residues: Small ribosomal subunit protein bS16 (91 aa).

It belongs to the bacterial ribosomal protein bS16 family.

The sequence is that of Small ribosomal subunit protein bS16 from Limosilactobacillus fermentum (strain NBRC 3956 / LMG 18251) (Lactobacillus fermentum).